The chain runs to 479 residues: Calcium uniporter protein, mitochondrial (479 aa).

Residues 1–54 (MNHALRRATLGLSPGLRASRLQQSFAKHQIPAVYRCEAASTPLQRAFTTSRCFR) constitute a mitochondrion transit peptide. Topologically, residues 55 to 323 (QETAAESEKD…DTLAHQGAHR (269 aa)) are mitochondrial matrix. Disordered regions lie at residues 56–125 (ETAA…KGRL) and 206–238 (EADQ…HEGP). Residues 59-79 (AESEKDDAARREEQSERARKR) are a coiled coil. The segment covering 60 to 75 (ESEKDDAARREEQSER) has biased composition (basic and acidic residues). The span at 83 to 93 (NVTSGSSAQTL) shows a compositional bias: polar residues. Composition is skewed to basic and acidic residues over residues 94-122 (ENDR…DMKK) and 206-224 (EADQ…KKDN). The chain crosses the membrane as a helical span at residues 324–344 (LAQGGFAALAGWWGVVYYVTF). The Mitochondrial intermembrane portion of the chain corresponds to 345–354 (HTQAGWDLVE). The Selectivity filter motif lies at 350-358 (WDLVEPVTY). Glu354 lines the Ca(2+) pocket. A helical membrane pass occupies residues 355-375 (PVTYLAGLTTVMGAYLWFLYI). Residues 376 to 479 (SRDLSYKAAM…GSSDKIKKKQ (104 aa)) lie on the Mitochondrial matrix side of the membrane. Positions 445–462 (KVLEEEKQGRDGTKVTEG) are enriched in basic and acidic residues. Residues 445–479 (KVLEEEKQGRDGTKVTEGKDEDDGPGSSDKIKKKQ) are disordered.

Belongs to the MCU (TC 1.A.77) family. Homotetramer, assembles in a dimer or dimers configuration with two interfaces.

The protein resides in the mitochondrion inner membrane. The enzyme catalyses Ca(2+)(in) = Ca(2+)(out). In terms of biological role, highly selective calcium channel localized to the inner mitochondrial membrane, which mediates calcium uptake into the mitochondrial matrix. Mitochondrial calcium homeostasis plays key roles in cellular physiology and regulates ATP production, cytoplasmic calcium signals and activation of cell death pathways. Sufficient to operate as a pore-forming channel without the need of calcium-sensor or auxiliary subunit. The chain is Calcium uniporter protein, mitochondrial from Gibberella zeae (strain ATCC MYA-4620 / CBS 123657 / FGSC 9075 / NRRL 31084 / PH-1) (Wheat head blight fungus).